Here is a 292-residue protein sequence, read N- to C-terminus: Lipoyl synthase (292 aa).

[4Fe-4S] cluster is bound by residues Cys38, Cys43, Cys49, Cys64, Cys68, Cys71, and Ser277. A Radical SAM core domain is found at 50–266 (WSKGTATFML…KNRAESLGFR (217 aa)).

Belongs to the radical SAM superfamily. Lipoyl synthase family. It depends on [4Fe-4S] cluster as a cofactor.

It is found in the cytoplasm. The catalysed reaction is [[Fe-S] cluster scaffold protein carrying a second [4Fe-4S](2+) cluster] + N(6)-octanoyl-L-lysyl-[protein] + 2 oxidized [2Fe-2S]-[ferredoxin] + 2 S-adenosyl-L-methionine + 4 H(+) = [[Fe-S] cluster scaffold protein] + N(6)-[(R)-dihydrolipoyl]-L-lysyl-[protein] + 4 Fe(3+) + 2 hydrogen sulfide + 2 5'-deoxyadenosine + 2 L-methionine + 2 reduced [2Fe-2S]-[ferredoxin]. The protein operates within protein modification; protein lipoylation via endogenous pathway; protein N(6)-(lipoyl)lysine from octanoyl-[acyl-carrier-protein]: step 2/2. Its function is as follows. Catalyzes the radical-mediated insertion of two sulfur atoms into the C-6 and C-8 positions of the octanoyl moiety bound to the lipoyl domains of lipoate-dependent enzymes, thereby converting the octanoylated domains into lipoylated derivatives. The polypeptide is Lipoyl synthase (Chlorobium limicola (strain DSM 245 / NBRC 103803 / 6330)).